Consider the following 425-residue polypeptide: MLDQRKIRENPTLIEKGLARRGLKVNLAPLTEASERLKGLEQHRNSLQAKGNLIGKEVGQKIKSGISPNSEEVVSLRSKGNELKREINVLEEEEKALAKSIRKRILNYPNIPYSECPDGKDENDNLQIRNWGNPLKGEGYKEHWEIAEELGLLDTEKSVRIAKSRFVTLFNHGARLERSLINFMLDIHTSKGYSEVLPPVLVNTASLEGSGQLPKFAEESFKCSEDDLWLTPTAEVPLTSLHRNEVIPFEKLPIKYVAYSPCFRREAGSYGRDTRGLIRLHQFNKVELYWFVEPKKSKEAHQIITADAEAILQKLELPYRVVELCSGDLGFSASCTYDLEVWLPGANSYREISSCSNCDDFQARRSFIRTKKGNQTQLVHTLNASGLAIGRTMAAILENGQQSDGTVKLPKALVPYFGENQLTPQ.

Position 233-235 (233-235 (TAE)) interacts with L-serine. Residue 264 to 266 (RRE) coordinates ATP. An L-serine-binding site is contributed by glutamate 287. 351-354 (EISS) provides a ligand contact to ATP. Serine 385 provides a ligand contact to L-serine.

Belongs to the class-II aminoacyl-tRNA synthetase family. Type-1 seryl-tRNA synthetase subfamily. Homodimer. The tRNA molecule binds across the dimer.

The protein resides in the cytoplasm. The enzyme catalyses tRNA(Ser) + L-serine + ATP = L-seryl-tRNA(Ser) + AMP + diphosphate + H(+). The catalysed reaction is tRNA(Sec) + L-serine + ATP = L-seryl-tRNA(Sec) + AMP + diphosphate + H(+). It participates in aminoacyl-tRNA biosynthesis; selenocysteinyl-tRNA(Sec) biosynthesis; L-seryl-tRNA(Sec) from L-serine and tRNA(Sec): step 1/1. Catalyzes the attachment of serine to tRNA(Ser). Is also able to aminoacylate tRNA(Sec) with serine, to form the misacylated tRNA L-seryl-tRNA(Sec), which will be further converted into selenocysteinyl-tRNA(Sec). The polypeptide is Serine--tRNA ligase (Prochlorococcus marinus (strain SARG / CCMP1375 / SS120)).